The primary structure comprises 546 residues: Coatomer subunit delta (546 aa).

An interaction with DSL1 region spans residues 190 to 440; sequence NRFMGSKDPN…VIFTIPVFPQ (251 aa). The disordered stretch occupies residues 236-287; that stretch reads PMATSQRAGHSATGGMKLGGGAGRRAGAAPRPSAISSASSGTPPPPEEDVPE. A compositionally biased stretch (low complexity) spans 260–276; that stretch reads RAGAAPRPSAISSASSG. Thr-277 is modified (phosphothreonine). The 259-residue stretch at 288–546 folds into the MHD domain; it reads NNGILISIKE…SLKSDEYLVQ (259 aa).

The protein belongs to the adaptor complexes medium subunit family. Delta-COP subfamily. Oligomeric complex that consists of at least the alpha, beta, beta', gamma, delta, epsilon and zeta subunits. Interacts with DSL1.

It localises to the cytoplasm. Its subcellular location is the golgi apparatus membrane. The protein localises to the cytoplasmic vesicle. The protein resides in the COPI-coated vesicle membrane. The coatomer is a cytosolic protein complex that binds to dilysine motifs and reversibly associates with Golgi non-clathrin-coated vesicles, which further mediate biosynthetic protein transport from the ER, via the Golgi up to the trans Golgi network. Coatomer complex is required for budding from Golgi membranes, and is essential for the retrograde Golgi-to-ER transport of dilysine-tagged proteins. In Saccharomyces cerevisiae (strain ATCC 204508 / S288c) (Baker's yeast), this protein is Coatomer subunit delta (RET2).